The following is a 163-amino-acid chain: Nucleotide-binding protein HSM_1099 (163 aa).

It belongs to the YajQ family.

In terms of biological role, nucleotide-binding protein. The protein is Nucleotide-binding protein HSM_1099 of Histophilus somni (strain 2336) (Haemophilus somnus).